Reading from the N-terminus, the 65-residue chain is Large ribosomal subunit protein uL29 (65 aa).

It belongs to the universal ribosomal protein uL29 family.

This is Large ribosomal subunit protein uL29 from Dehalococcoides mccartyi (strain ATCC BAA-2266 / KCTC 15142 / 195) (Dehalococcoides ethenogenes (strain 195)).